The primary structure comprises 211 residues: MIGIIDYGMGNLYSVSKALERLRYEYIISDDPKELKNAKGLILPGVGSFKDAMHILRETGLAKFVCEAVNEGTPLLGICLGMQLLFDESEENGLTEGLGLLSGRVVRIPGVTADGNRYKVPHMGWNRLVFRHPSPLLQNVEEGHVYFVHSYYVVTDDDDVVLASSFYNVEVPAVVGKGNVYGTQFHPEKSGEIGMKILQNYASIIEGKGSM.

A Glutamine amidotransferase type-1 domain is found at 1–211 (MIGIIDYGMG…ASIIEGKGSM (211 aa)). C79 acts as the Nucleophile in catalysis. Active-site residues include H186 and E188.

Heterodimer of HisH and HisF.

It localises to the cytoplasm. The catalysed reaction is 5-[(5-phospho-1-deoxy-D-ribulos-1-ylimino)methylamino]-1-(5-phospho-beta-D-ribosyl)imidazole-4-carboxamide + L-glutamine = D-erythro-1-(imidazol-4-yl)glycerol 3-phosphate + 5-amino-1-(5-phospho-beta-D-ribosyl)imidazole-4-carboxamide + L-glutamate + H(+). It catalyses the reaction L-glutamine + H2O = L-glutamate + NH4(+). The protein operates within amino-acid biosynthesis; L-histidine biosynthesis; L-histidine from 5-phospho-alpha-D-ribose 1-diphosphate: step 5/9. Its function is as follows. IGPS catalyzes the conversion of PRFAR and glutamine to IGP, AICAR and glutamate. The HisH subunit catalyzes the hydrolysis of glutamine to glutamate and ammonia as part of the synthesis of IGP and AICAR. The resulting ammonia molecule is channeled to the active site of HisF. The sequence is that of Imidazole glycerol phosphate synthase subunit HisH from Geobacillus sp. (strain WCH70).